The primary structure comprises 358 residues: MVNPQVIGYIGAAVASLFFGSNYVPVKNYPTGNGLAFTWVMSVGTLVVAYCAMFISKDYIFDPWGLLGGTLWSIGNFCVIPIVKTIGIGLGLLLWCCSSIITGYFTGKFGWFGIDKQKVSHPALNWIGFACIVAAVIFFFFIEPTIEEKDEHSYSSIVDDSEIGNNGIDNNGYNSINNNNNNGNNKRRSGAFNKQPKKSIFERMPPPYNTILGIVLSVFSGIMYGVNMVPMQLWKQSNVDASPLSFVFCHFSGIFLANTAVFIVYSIIVRPPQIFPQTIFPSFFSGLLWGIANVGLMVATQNLGYTIGFPMGSGGPMIVSSLWSVFYFREIQGVKNLLILLISFIFLGAGITILALSH.

The next 10 membrane-spanning stretches (helical) occupy residues 6 to 26 (VIGY…YVPV), 35 to 55 (LAFT…AMFI), 60 to 79 (IFDP…NFCV), 86 to 108 (IGIG…FTGK), 122 to 142 (PALN…FFFI), 211 to 231 (ILGI…MVPM), 244 to 264 (LSFV…VFIV), 279 to 299 (IFPS…LMVA), 307 to 327 (IGFP…SVFY), and 337 to 357 (LLIL…LALS).

It belongs to the TMEM144 family.

It localises to the membrane. This Dictyostelium discoideum (Social amoeba) protein is Transmembrane protein 144 homolog B (tmem144B).